Here is a 362-residue protein sequence, read N- to C-terminus: tRNA-specific 2-thiouridylase MnmA (362 aa).

Residues 9 to 16 (GMSGGVDS) and Met35 each bind ATP. The tract at residues 95–97 (NPD) is interaction with target base in tRNA. Cys100 serves as the catalytic Nucleophile. Cys100 and Cys196 are joined by a disulfide. Gly124 serves as a coordination point for ATP. Residues 146 to 148 (KDQ) are interaction with tRNA. The active-site Cysteine persulfide intermediate is Cys196. The interaction with tRNA stretch occupies residues 308–309 (RY).

It belongs to the MnmA/TRMU family.

The protein resides in the cytoplasm. It carries out the reaction S-sulfanyl-L-cysteinyl-[protein] + uridine(34) in tRNA + AH2 + ATP = 2-thiouridine(34) in tRNA + L-cysteinyl-[protein] + A + AMP + diphosphate + H(+). In terms of biological role, catalyzes the 2-thiolation of uridine at the wobble position (U34) of tRNA, leading to the formation of s(2)U34. In Nitrosomonas europaea (strain ATCC 19718 / CIP 103999 / KCTC 2705 / NBRC 14298), this protein is tRNA-specific 2-thiouridylase MnmA.